Consider the following 459-residue polypeptide: tRNA modification GTPase MnmE (459 aa).

(6S)-5-formyl-5,6,7,8-tetrahydrofolate is bound by residues arginine 22, glutamate 85, and arginine 124. The region spanning 221-380 (GLSTVIVGKP…LEIQIRDLFF (160 aa)) is the TrmE-type G domain. Residue asparagine 231 participates in K(+) binding. Residues 231–236 (NVGKSS), 250–256 (TEVAGTT), and 275–278 (DTAG) each bind GTP. Residue serine 235 coordinates Mg(2+). The K(+) site is built by threonine 250, valine 252, and threonine 255. Threonine 256 contributes to the Mg(2+) binding site. Residue lysine 459 coordinates (6S)-5-formyl-5,6,7,8-tetrahydrofolate.

It belongs to the TRAFAC class TrmE-Era-EngA-EngB-Septin-like GTPase superfamily. TrmE GTPase family. As to quaternary structure, homodimer. Heterotetramer of two MnmE and two MnmG subunits. Requires K(+) as cofactor.

The protein localises to the cytoplasm. In terms of biological role, exhibits a very high intrinsic GTPase hydrolysis rate. Involved in the addition of a carboxymethylaminomethyl (cmnm) group at the wobble position (U34) of certain tRNAs, forming tRNA-cmnm(5)s(2)U34. The sequence is that of tRNA modification GTPase MnmE from Staphylococcus aureus (strain MSSA476).